The following is a 36-amino-acid chain: Photosystem I reaction center subunit VIII (36 aa).

The chain crosses the membrane as a helical span at residues 6–28; it reads LPSIFVPLVGLLFPAIAMVSLFF.

This sequence belongs to the PsaI family.

The protein localises to the plastid. The protein resides in the chloroplast thylakoid membrane. Its function is as follows. May help in the organization of the PsaL subunit. The chain is Photosystem I reaction center subunit VIII from Nymphaea alba (White water-lily).